Consider the following 118-residue polypeptide: Large ribosomal subunit protein uL18 (118 aa).

It belongs to the universal ribosomal protein uL18 family. Part of the 50S ribosomal subunit; part of the 5S rRNA/L5/L18/L25 subcomplex. Contacts the 5S and 23S rRNAs.

This is one of the proteins that bind and probably mediate the attachment of the 5S RNA into the large ribosomal subunit, where it forms part of the central protuberance. The chain is Large ribosomal subunit protein uL18 from Cupriavidus pinatubonensis (strain JMP 134 / LMG 1197) (Cupriavidus necator (strain JMP 134)).